We begin with the raw amino-acid sequence, 445 residues long: Argininosuccinate lyase (445 aa).

This sequence belongs to the lyase 1 family. Argininosuccinate lyase subfamily.

It is found in the cytoplasm. It catalyses the reaction 2-(N(omega)-L-arginino)succinate = fumarate + L-arginine. It functions in the pathway amino-acid biosynthesis; L-arginine biosynthesis; L-arginine from L-ornithine and carbamoyl phosphate: step 3/3. This is Argininosuccinate lyase from Xylella fastidiosa (strain Temecula1 / ATCC 700964).